Consider the following 3971-residue polypeptide: Mycosubtilin synthase subunit A (3971 aa).

Positions 160–479 are acyl-CoA ligase; it reads EPEADELAFI…ELEDIDLGRV (320 aa). Positions 578–653 constitute a Carrier 1 domain; it reads TPIHEIETAL…DLAAFLVENH (76 aa). Ser613 is subject to O-(pantetheine 4'-phosphoryl)serine. The region spanning 669–1092 is the Ketosynthase family 3 (KS3) domain; sequence SKDIAIIGMS…GTNAHVVLEE (424 aa). Residues Cys843, His974, and His1014 each act as for beta-ketoacyl synthase activity in the active site. Residues 1290-1365 form the Carrier 2 domain; it reads THIESFLKTV…SVVDYLAENV (76 aa). The residue at position 1324 (Ser1324) is an O-(pantetheine 4'-phosphoryl)serine. A disordered region spans residues 1434-1456; sequence ESEISQDKTSLSPKSVTAKKNSA. A compositionally biased stretch (polar residues) spans 1440 to 1456; that stretch reads DKTSLSPKSVTAKKNSA. Residues 1529 to 1856 are GSA-AT; that stretch reads IIAERSDGSR…SYFEQSQVPI (328 aa). The residue at position 1759 (Lys1759) is an N6-(pyridoxal phosphate)lysine. The disordered stretch occupies residues 1921-1942; sequence GGFIPEGPDSPNDGGHKEPETY. A condensation 1 region spans residues 1938-2240; the sequence is EPETYELSPE…NMVPVKNTAS (303 aa). Residues 2405–2480 form the Carrier 3 domain; that stretch reads EPENETELQI…ELANFIRGEK (76 aa). Ser2440 bears the O-(pantetheine 4'-phosphoryl)serine mark. The tract at residues 2492–2781 is condensation 2; sequence QKAFYRTSPA…QTMGIRTKPQ (290 aa). Residues 2937 to 3823 form a domain 1 (asparagine-activating) region; it reads PHNDTVCQWF…RNHPAGRKIF (887 aa). Residues 2967 to 3364 form an adenylation 1 region; sequence TYGQLNERVN…KVEAVQKAVV (398 aa). In terms of domain architecture, Carrier 4 spans 3442–3517; the sequence is PPGNEVESKL…QLANMALRME (76 aa). At Ser3477 the chain carries O-(pantetheine 4'-phosphoryl)serine. Residues 3529–3818 are condensation 3; that stretch reads KISYYPVSSA…NTLVIRNHPA (290 aa).

Belongs to the ATP-dependent AMP-binding enzyme family. Requires pyridoxal 5'-phosphate as cofactor. Pantetheine 4'-phosphate serves as cofactor.

Functionally, this protein is a multifunctional enzyme, able to activate a long chain fatty acid and link it with the amino acid Asn as part of the synthesis of mycosubtilin. The activation sites consist of individual domains. This Bacillus subtilis protein is Mycosubtilin synthase subunit A (mycA).